Reading from the N-terminus, the 103-residue chain is Cystatin-A (103 aa).

M1 bears the N-acetylmethionine mark. The short motif at 52–56 is the Secondary area of contact element; sequence QVVAG.

It belongs to the cystatin family.

The protein localises to the cytoplasm. This is an intracellular thiol proteinase inhibitor. The chain is Cystatin-A (Csta) from Rattus norvegicus (Rat).